Reading from the N-terminus, the 57-residue chain is MMEKMKDVNWQEEIRKIIIERVRREAKKRLLEETRKLRMEMKSSKIAEMIREDRDAR.

A coiled-coil region spans residues 9–45 (NWQEEIRKIIIERVRREAKKRLLEETRKLRMEMKSSK).

This is an uncharacterized protein from Archaeoglobus fulgidus (strain ATCC 49558 / DSM 4304 / JCM 9628 / NBRC 100126 / VC-16).